A 329-amino-acid chain; its full sequence is MVKTQRVVITPGEPAGIGPDLIVQLAQREWPVELVVCADATLLTDRAAMLGLPLTLRPYSPNSPAQPQTAGTLTLLPVALRESVTVGQLAVENGHYVVETLARACDGCLNGEFAALITGPVHKGVINDAGIPFTGHTEFFEERSQAKKVVMMLATEELRVALATTHLPLRDIADAITPALLHEVIAILHHDLRTKFGIAEPRILVCGLNPHAGEGGHMGTEEIDTIIPVLNELREQGMKLNGPLPADTLFQPKYLDNADAVLAMYHDQGLPVLKYQGFGRGVNITLGLPFIRTSVDHGTALELAGRGKADVGSFITALNLAIKMIVNTQ.

Residues His136 and Thr137 each coordinate substrate. A divalent metal cation-binding residues include His166, His211, and His266. Positions 274, 283, and 292 each coordinate substrate.

It belongs to the PdxA family. In terms of assembly, homodimer. It depends on Zn(2+) as a cofactor. Requires Mg(2+) as cofactor. The cofactor is Co(2+).

It localises to the cytoplasm. The enzyme catalyses 4-(phosphooxy)-L-threonine + NAD(+) = 3-amino-2-oxopropyl phosphate + CO2 + NADH. Its pathway is cofactor biosynthesis; pyridoxine 5'-phosphate biosynthesis; pyridoxine 5'-phosphate from D-erythrose 4-phosphate: step 4/5. Functionally, catalyzes the NAD(P)-dependent oxidation of 4-(phosphooxy)-L-threonine (HTP) into 2-amino-3-oxo-4-(phosphooxy)butyric acid which spontaneously decarboxylates to form 3-amino-2-oxopropyl phosphate (AHAP). This Escherichia coli O6:H1 (strain CFT073 / ATCC 700928 / UPEC) protein is 4-hydroxythreonine-4-phosphate dehydrogenase.